A 404-amino-acid polypeptide reads, in one-letter code: Acetate kinase (404 aa).

Residue Asn7 coordinates Mg(2+). Lys14 serves as a coordination point for ATP. Residue Arg95 participates in substrate binding. Asp152 functions as the Proton donor/acceptor in the catalytic mechanism. Residues 212 to 216 (HLGNG), 286 to 288 (DMR), and 334 to 338 (GIGEN) each bind ATP. Glu388 contributes to the Mg(2+) binding site.

Belongs to the acetokinase family. As to quaternary structure, homodimer. Mg(2+) serves as cofactor. Mn(2+) is required as a cofactor.

The protein localises to the cytoplasm. It carries out the reaction acetate + ATP = acetyl phosphate + ADP. It functions in the pathway metabolic intermediate biosynthesis; acetyl-CoA biosynthesis; acetyl-CoA from acetate: step 1/2. In terms of biological role, catalyzes the formation of acetyl phosphate from acetate and ATP. Can also catalyze the reverse reaction. This is Acetate kinase from Lawsonia intracellularis (strain PHE/MN1-00).